Here is a 106-residue protein sequence, read N- to C-terminus: uncharacterized protein (106 aa).

This is an uncharacterized protein from Archaeoglobus fulgidus (strain ATCC 49558 / DSM 4304 / JCM 9628 / NBRC 100126 / VC-16).